The chain runs to 210 residues: Holliday junction branch migration complex subunit RuvA (210 aa).

Residues 1 to 64 (MIGLIEGRVC…EDAQLLYGFL (64 aa)) form a domain I region. A domain II region spans residues 65 to 143 (HPTERDVFRQ…HIQSDMSLLT (79 aa)). The flexible linker stretch occupies residues 144 to 154 (EVEQQIGIAAN). Residues 155–210 (SEGVILAEVESALISLGYRDKEAQQAIKAARETDAGQQLVDTQSLLKLTLKQLSNF) form a domain III region.

This sequence belongs to the RuvA family. In terms of assembly, homotetramer. Forms an RuvA(8)-RuvB(12)-Holliday junction (HJ) complex. HJ DNA is sandwiched between 2 RuvA tetramers; dsDNA enters through RuvA and exits via RuvB. An RuvB hexamer assembles on each DNA strand where it exits the tetramer. Each RuvB hexamer is contacted by two RuvA subunits (via domain III) on 2 adjacent RuvB subunits; this complex drives branch migration. In the full resolvosome a probable DNA-RuvA(4)-RuvB(12)-RuvC(2) complex forms which resolves the HJ.

It localises to the cytoplasm. In terms of biological role, the RuvA-RuvB-RuvC complex processes Holliday junction (HJ) DNA during genetic recombination and DNA repair, while the RuvA-RuvB complex plays an important role in the rescue of blocked DNA replication forks via replication fork reversal (RFR). RuvA specifically binds to HJ cruciform DNA, conferring on it an open structure. The RuvB hexamer acts as an ATP-dependent pump, pulling dsDNA into and through the RuvAB complex. HJ branch migration allows RuvC to scan DNA until it finds its consensus sequence, where it cleaves and resolves the cruciform DNA. The chain is Holliday junction branch migration complex subunit RuvA from Psychrobacter sp. (strain PRwf-1).